The following is a 187-amino-acid chain: Large ribosomal subunit protein bL21 (187 aa).

A disordered region spans residues 157-187 (KVAKKAVKKTVKKATKTGAKKKAAKKTSKKA).

This sequence belongs to the bacterial ribosomal protein bL21 family. As to quaternary structure, part of the 50S ribosomal subunit. Contacts protein L20.

In terms of biological role, this protein binds to 23S rRNA in the presence of protein L20. The protein is Large ribosomal subunit protein bL21 of Bdellovibrio bacteriovorus (strain ATCC 15356 / DSM 50701 / NCIMB 9529 / HD100).